Reading from the N-terminus, the 511-residue chain is Lysine--tRNA ligase 2 (511 aa).

The segment at 1 to 22 (MTMEINNTDPFEKMPLPDDSGL) is disordered. The Mg(2+) site is built by Glu421 and Glu428.

This sequence belongs to the class-II aminoacyl-tRNA synthetase family. In terms of assembly, homodimer. Mg(2+) serves as cofactor.

It localises to the cytoplasm. It carries out the reaction tRNA(Lys) + L-lysine + ATP = L-lysyl-tRNA(Lys) + AMP + diphosphate. This is Lysine--tRNA ligase 2 from Methanosarcina mazei (strain ATCC BAA-159 / DSM 3647 / Goe1 / Go1 / JCM 11833 / OCM 88) (Methanosarcina frisia).